The chain runs to 250 residues: UPF0309 protein BH0227 (250 aa).

The SIS domain maps to 31–214; that stretch reads VAESIQNGGI…KRMADNGYEP (184 aa).

Belongs to the UPF0309 family.

The polypeptide is UPF0309 protein BH0227 (Halalkalibacterium halodurans (strain ATCC BAA-125 / DSM 18197 / FERM 7344 / JCM 9153 / C-125) (Bacillus halodurans)).